Reading from the N-terminus, the 236-residue chain is Ubiquinone biosynthesis O-methyltransferase (236 aa).

4 residues coordinate S-adenosyl-L-methionine: Arg39, Gly59, Asp80, and Met124.

This sequence belongs to the methyltransferase superfamily. UbiG/COQ3 family.

The catalysed reaction is a 3-demethylubiquinol + S-adenosyl-L-methionine = a ubiquinol + S-adenosyl-L-homocysteine + H(+). The enzyme catalyses a 3-(all-trans-polyprenyl)benzene-1,2-diol + S-adenosyl-L-methionine = a 2-methoxy-6-(all-trans-polyprenyl)phenol + S-adenosyl-L-homocysteine + H(+). It functions in the pathway cofactor biosynthesis; ubiquinone biosynthesis. O-methyltransferase that catalyzes the 2 O-methylation steps in the ubiquinone biosynthetic pathway. The sequence is that of Ubiquinone biosynthesis O-methyltransferase from Pseudoalteromonas translucida (strain TAC 125).